A 724-amino-acid polypeptide reads, in one-letter code: MWTQKWHKYYTAQVDENDCGLAALNMILKYYGSDYMLAHLRQLAKTTADGTTVLGLVKAAKHLNLNAEAVRADMDALTASQLPLPVIVHVFKKNKLPHYYVVYQVTENDLIIGDPDPTVKTTKISKSQFAKEWTQIAIIIAPTVKYKPIKESRHTLIDLVPLLIKQKRLIGLIITAAAITTLISIAGAYFFQLIIDTYLPHLMTNRLSLVAIGLIVAYAFQAIINYIQSFFTIVLGQRLMIDIVLKYVHHLFDLPMNFFTTRHVGEMTSRFSDASKIIDALGSTTLTLFLDMWILLAVGLFLAYQNINLFLCSLVVVPIYISIVWLFKKTFNRLNQDTMESNAVLNSAIIESLSGIETIKSLTGEATTKKKIDTLFSDLLHKNLAYQKADQGQQAIKAATKLILTIVILWWGTFFVMRHQLSLGQLLTYNALLAYFLTPLENIINLQPKLQAARVANNRLNEVYLVESEFSKSREITALEQLNGDIEVNHVSFNYGYCSNILEDVSLTIPHHQKITIVGMSGSGKTTLAKLLVGFFEPQEQHGEIQINHHNISDISRTILRQYINYVPQEPFIFSGSVLENLLLGSRPGVTQQMIDQACSFAEIKTDIENLPQGYHTRLSESGFNLSGGQKQRLSIARALLSPAQCFIFDESTSNLDTITEHKIVSKLLFMKDKTIIFVAHRLNIASQTDKVVVLDHGKIVEQGSHRQLLNYNGYYARLIHNQE.

A Peptidase C39 domain is found at 13 to 140; it reads QVDENDCGLA…KEWTQIAIII (128 aa). The active site involves cysteine 19. Helical transmembrane passes span 170–190, 207–227, 284–304, 307–327, 396–416, and 426–446; these read IGLI…GAYF, LSLV…INYI, TTLT…FLAY, INLF…VWLF, IKAA…TFFV, and LLTY…IINL. The ABC transmembrane type-1 domain maps to 170-452; sequence IGLIITAAAI…IINLQPKLQA (283 aa). An ABC transporter domain is found at 486–722; that stretch reads IEVNHVSFNY…NGYYARLIHN (237 aa). ATP is bound at residue 519–526; it reads GMSGSGKT.

The protein belongs to the ABC transporter superfamily. Pediocin PA-1 exporter (TC 3.A.1.112.2) family.

The protein resides in the cell membrane. Its function is as follows. Involved in the export process of the bacteriocin pediocin PA-1/AcH. Is also essential for pediocin production. This is Pediocin PA-1 transport/processing ATP-binding protein PedD (pedD) from Pediococcus acidilactici.